Consider the following 196-residue polypeptide: MKPLVVFVLGGPGAGKGTQCARIVEKYGYTHLSAGELLRDERKNPDSQYGELIEKYIKEGKIVPVEITISLLKREMDQTMAANAQKNKFLIDGFPRNQDNLQGWNKTMDGKADVSFVLFFDCNNEICIERCLERGKSSGRSDDNRESLEKRIQTYLESTKPIIDLYEEMGKVKKIDASKSVDEVFGEVVKIFDKEG.

Residue 13–18 (GAGKGT) participates in ATP binding. S33 bears the Phosphoserine mark. Residues 33–63 (SAGELLRDERKNPDSQYGELIEKYIKEGKIV) form an NMP region. R39 contributes to the a ribonucleoside 5'-phosphate binding site. 2 positions are modified to N6-acetyllysine: K43 and K55. 61-63 (KIV) is an a ribonucleoside 5'-phosphate binding site. A Glycyl lysine isopeptide (Lys-Gly) (interchain with G-Cter in SUMO2) cross-link involves residue K73. Residue 93–96 (GFPR) participates in a ribonucleoside 5'-phosphate binding. N100 is a CMP binding site. The residue at position 106 (K106) is an N6-succinyllysine. Residues 133-143 (ERGKSSGRSDD) form an LID region. R134 provides a ligand contact to ATP. Positions 140 and 151 each coordinate a ribonucleoside 5'-phosphate. K179 provides a ligand contact to ATP. A Phosphoserine modification is found at S180.

It belongs to the adenylate kinase family. UMP-CMP kinase subfamily. Monomer. Mg(2+) serves as cofactor.

It localises to the nucleus. The protein localises to the cytoplasm. The catalysed reaction is CMP + ATP = CDP + ADP. It carries out the reaction dCMP + ATP = dCDP + ADP. It catalyses the reaction UMP + ATP = UDP + ADP. The enzyme catalyses a 2'-deoxyribonucleoside 5'-diphosphate + ATP = a 2'-deoxyribonucleoside 5'-triphosphate + ADP. The catalysed reaction is a ribonucleoside 5'-diphosphate + ATP = a ribonucleoside 5'-triphosphate + ADP. Its function is as follows. Catalyzes the phosphorylation of pyrimidine nucleoside monophosphates at the expense of ATP. Plays an important role in de novo pyrimidine nucleotide biosynthesis. Has preference for UMP and CMP as phosphate acceptors. Also displays broad nucleoside diphosphate kinase activity. The chain is UMP-CMP kinase (Cmpk1) from Mus musculus (Mouse).